A 248-amino-acid chain; its full sequence is Adenosylcobinamide-GDP ribazoletransferase (248 aa).

Transmembrane regions (helical) follow at residues 24-44 (EINL…IGAW), 70-90 (IIIT…GLFS), 106-126 (VGAN…ALFL), 134-154 (IGWL…LLFA), 168-188 (IFLG…LVAL), 189-209 (GAFF…FTII), and 228-248 (AGGQ…WGLI).

This sequence belongs to the CobS family. It depends on Mg(2+) as a cofactor.

The protein resides in the cell membrane. It carries out the reaction alpha-ribazole + adenosylcob(III)inamide-GDP = adenosylcob(III)alamin + GMP + H(+). It catalyses the reaction alpha-ribazole 5'-phosphate + adenosylcob(III)inamide-GDP = adenosylcob(III)alamin 5'-phosphate + GMP + H(+). It functions in the pathway cofactor biosynthesis; adenosylcobalamin biosynthesis; adenosylcobalamin from cob(II)yrinate a,c-diamide: step 7/7. In terms of biological role, joins adenosylcobinamide-GDP and alpha-ribazole to generate adenosylcobalamin (Ado-cobalamin). Also synthesizes adenosylcobalamin 5'-phosphate from adenosylcobinamide-GDP and alpha-ribazole 5'-phosphate. This chain is Adenosylcobinamide-GDP ribazoletransferase, found in Listeria monocytogenes serotype 4a (strain HCC23).